Consider the following 362-residue polypeptide: Tyrosyl-DNA phosphodiesterase 2 (362 aa).

Residue methionine 1 is modified to N-acetylmethionine. The tract at residues methionine 1–proline 20 is disordered. Glycyl lysine isopeptide (Lys-Gly) (interchain with G-Cter in SUMO2) cross-links involve residues lysine 23 and lysine 82. A disordered region spans residues leucine 87 to glutamate 109. A phosphothreonine; by ACVR1B mark is found at threonine 88 and threonine 92. The segment covering aspartate 94–glutamate 109 has biased composition (polar residues). The residue at position 95 (serine 95) is a Phosphoserine. The interval asparagine 120–leucine 124 is interaction with 5' end of substrate DNA. Mg(2+) is bound by residues aspartate 122 and glutamate 152. The interval histidine 226–arginine 231 is interaction with 5' end of substrate DNA. Residue aspartate 262 is the Proton donor/acceptor of the active site. Residues asparagine 264 to arginine 266 form an interaction with 5' end of substrate DNA region.

This sequence belongs to the CCR4/nocturin family. In terms of assembly, interacts with TRAF2, TRAF3, TRAF5, TRAF6, TNFRSF8/CD30, TNFRSF5/CD40, TNFRSF1B/TNF-R75, ETS1, ETS2, FLI1, SMAD3 and ACVR1B/ALK4. (Microbial infection) Interacts with Hantaan hantavirus nucleoprotein. As to quaternary structure, (Microbial infection) Interacts with Seoul hantavirus nucleoprotein. It depends on Mg(2+) as a cofactor. Mn(2+) serves as cofactor. Ubiquitinated by TRAF6. Widely expressed. Highly expressed in various brain regions, including the frontal and occipital lobes, the hippocampus, the striatum and the cerebellum.

Its subcellular location is the nucleus. It is found in the PML body. The protein localises to the nucleolus. It localises to the cytoplasm. Functionally, DNA repair enzyme that can remove a variety of covalent adducts from DNA through hydrolysis of a 5'-phosphodiester bond, giving rise to DNA with a free 5' phosphate. Catalyzes the hydrolysis of dead-end complexes between DNA and the topoisomerase 2 (TOP2) active site tyrosine residue. The 5'-tyrosyl DNA phosphodiesterase activity can enable the repair of TOP2-induced DNA double-strand breaks/DSBs without the need for nuclease activity, creating a 'clean' DSB with 5'-phosphate termini that are ready for ligation. Thereby, protects the transcription of many genes involved in neurological development and maintenance from the abortive activity of TOP2. Hydrolyzes 5'-phosphoglycolates on protruding 5' ends on DSBs due to DNA damage by radiation and free radicals. Has preference for single-stranded DNA or duplex DNA with a 4 base pair overhang as substrate. Acts as a regulator of ribosome biogenesis following stress. Also has 3'-tyrosyl DNA phosphodiesterase activity, but less efficiently and much slower than TDP1. Constitutes the major if not only 5'-tyrosyl-DNA phosphodiesterase in cells. Also acts as an adapter by participating in the specific activation of MAP3K7/TAK1 in response to TGF-beta: associates with components of the TGF-beta receptor-TRAF6-TAK1 signaling module and promotes their ubiquitination dependent complex formation. Involved in non-canonical TGF-beta induced signaling routes. May also act as a negative regulator of ETS1 and may inhibit NF-kappa-B activation. Its function is as follows. (Microbial infection) Used by picornaviruses to remove the small polypeptide, VPg (virus Protein genome-linked, the primer for viral RNA synthesis), from the genomic RNA of the virus. Acts as a 5'-tyrosyl RNA phosphodiesterase and cleaves the covalent VPg-Tyr-RNA bond. This cleavage would play a role in viral replication and occur in viral replication vesicles, but would not act on viral mRNA. The polypeptide is Tyrosyl-DNA phosphodiesterase 2 (Homo sapiens (Human)).